The following is a 470-amino-acid chain: Na(+)/H(+) antiporter NhaA 2 (470 aa).

Helical transmembrane passes span 34–54 (FLHI…IALL), 85–105 (LEWV…GMEI), 121–141 (ALPA…YLLL), 150–170 (GWGV…TLLG), 179–199 (VLLL…IAVF), 202–222 (SGVA…VFAM), 241–261 (WAGV…IGLI), 317–337 (SLIA…FALA), 357–377 (LATA…ACWL), 395–415 (LLVL…IAQL), and 423–443 (LAAG…VALV).

It belongs to the NhaA Na(+)/H(+) (TC 2.A.33) antiporter family.

It is found in the cell inner membrane. The catalysed reaction is Na(+)(in) + 2 H(+)(out) = Na(+)(out) + 2 H(+)(in). In terms of biological role, na(+)/H(+) antiporter that extrudes sodium in exchange for external protons. In Myxococcus xanthus (strain DK1622), this protein is Na(+)/H(+) antiporter NhaA 2.